The following is a 104-amino-acid chain: uncharacterized protein (104 aa).

2 consecutive transmembrane segments (helical) span residues 16–36 and 44–64; these read LAFF…LASY and GGFG…FLCI.

It localises to the cell membrane. This is an uncharacterized protein from Bacillus anthracis.